Here is a 154-residue protein sequence, read N- to C-terminus: MARIAYSTKIEGDNLARGKANELSISPKHSIEIADFIRHQRVNDALAYLADVVALKKAIPFRHFNRNVAHKRGLPGNWDAGRYPVKASKAYIRILESIKKNAEYTGLDTENLEIIHASANRGRAQKAYFPRAMGRASPKVRETVNIEIVVREVA.

It belongs to the universal ribosomal protein uL22 family. Part of the 50S ribosomal subunit.

Functionally, this protein binds specifically to 23S rRNA. It makes multiple contacts with different domains of the 23S rRNA in the assembled 50S subunit and ribosome. Its function is as follows. The globular domain of the protein is located near the polypeptide exit tunnel on the outside of the subunit, while an extended beta-hairpin is found that lines the wall of the exit tunnel in the center of the 70S ribosome. The chain is Large ribosomal subunit protein uL22 from Methanoregula boonei (strain DSM 21154 / JCM 14090 / 6A8).